We begin with the raw amino-acid sequence, 348 residues long: Nuclear receptor subfamily 1 group I member 3 (348 aa).

The nuclear receptor DNA-binding region spans 8–83; that stretch reads PRSCMVCGDR…AGMKKEMILS (76 aa). The NR C4-type zinc finger occupies 11–31; that stretch reads CMVCGDRATGYHFHALTCEGC. T38 is modified (phosphothreonine; by PKC). The segment at 47-71 adopts an NR C4-type zinc-finger fold; that stretch reads CPFAGNCKVNKAQRRHCPACRLQKC. The NR LBD domain maps to 109–348; that stretch reads GQQELVQTLL…MMPLLQEICS (240 aa).

This sequence belongs to the nuclear hormone receptor family. NR1 subfamily. As to quaternary structure, heterodimer of NR1I3 and RXR. Interacts with PSMC4. Interacts with ECT2. Directly interacts with DNAJC7; this complex may also include HSP90. Interacts with CRY1. Interacts with CRY2 in a ligand-dependent manner. Post-translationally, phosphorylated at Thr-38 by PKC, dephosphorylation of Thr-38 is required for nuclear translocation and activation.

It localises to the nucleus. The protein localises to the cytoplasm. The protein resides in the cytoskeleton. Functionally, binds and transactivates the retinoic acid response elements that control expression of the retinoic acid receptor beta 2 and alcohol dehydrogenase 3 genes. Transactivates both the phenobarbital responsive element module of the human CYP2B6 gene and the CYP3A4 xenobiotic response element. The sequence is that of Nuclear receptor subfamily 1 group I member 3 (NR1I3) from Callorhinus ursinus (Northern fur seal).